A 390-amino-acid polypeptide reads, in one-letter code: Peroxisomal sarcosine oxidase (390 aa).

Position 9–39 (9–39 (DAIVIGAGIQGCFTAYHLAKHRKRILLLEQF)) interacts with FAD. Lysine 126 is modified (N6-acetyllysine). Cysteine 319 carries the S-8alpha-FAD cysteine modification. Residues 388–390 (AHL) carry the Microbody targeting signal motif.

Belongs to the MSOX/MTOX family. FAD is required as a cofactor. Expressed in the liver and kidney.

It is found in the peroxisome. The catalysed reaction is sarcosine + O2 + H2O = formaldehyde + glycine + H2O2. It carries out the reaction L-pipecolate + O2 = L-1-piperideine-6-carboxylate + H2O2 + H(+). In terms of biological role, metabolizes sarcosine and L-pipecolic acid. The sequence is that of Peroxisomal sarcosine oxidase (PIPOX) from Homo sapiens (Human).